The sequence spans 393 residues: Actin-related protein 2 (393 aa).

Residues 158–160 (GDG), 212–216 (RQMKE), and 303–308 (GGTTMY) contribute to the ATP site.

The protein belongs to the actin family. ARP2 subfamily. Component of the Arp2/3 complex.

It localises to the cytoplasm. Its subcellular location is the cytoskeleton. Its function is as follows. Functions as ATP-binding component of the Arp2/3 complex which is involved in regulation of actin polymerization and together with an activating nucleation-promoting factor (NPF) mediates the formation of branched actin networks. Seems to contact the pointed end of the daughter actin filament. The chain is Actin-related protein 2 (arx-2) from Caenorhabditis briggsae.